Reading from the N-terminus, the 295-residue chain is Giardin subunit alpha-1 (295 aa).

4 Annexin repeats span residues 2–71 (PKVT…MDLF), 73–143 (DRHE…MEKW), 153–223 (GSPE…AHFA), and 226–293 (GMHR…TLWR).

The protein belongs to the annexin family. Giardin subunit alpha subfamily.

Its subcellular location is the cytoplasm. The protein localises to the cytoskeleton. Giardins are involved in parasite attachment to the intestinal mucosa and in the cytoskeletal disassembly and reassembly that marks the transition from infectious trophozoite to transmissible cyst. They may interact with other cytoskeletal proteins such as microtubules in the microribbons or crossbridges, to maintain the integrity of the ventral disk. This Giardia intestinalis (Giardia lamblia) protein is Giardin subunit alpha-1.